We begin with the raw amino-acid sequence, 364 residues long: Methylthioribose-1-phosphate isomerase (364 aa).

Asp-254 acts as the Proton donor in catalysis.

Belongs to the eIF-2B alpha/beta/delta subunits family. MtnA subfamily.

It localises to the cytoplasm. The protein localises to the nucleus. It catalyses the reaction 5-(methylsulfanyl)-alpha-D-ribose 1-phosphate = 5-(methylsulfanyl)-D-ribulose 1-phosphate. The protein operates within amino-acid biosynthesis; L-methionine biosynthesis via salvage pathway; L-methionine from S-methyl-5-thio-alpha-D-ribose 1-phosphate: step 1/6. Its function is as follows. Catalyzes the interconversion of methylthioribose-1-phosphate (MTR-1-P) into methylthioribulose-1-phosphate (MTRu-1-P). This Drosophila ananassae (Fruit fly) protein is Methylthioribose-1-phosphate isomerase.